A 214-amino-acid polypeptide reads, in one-letter code: uncharacterized protein (214 aa).

The N-terminal stretch at methionine 1–glycine 18 is a signal peptide. Asparagine 64 carries N-linked (GlcNAc...) asparagine; by host glycosylation.

This is an uncharacterized protein from Magallana gigas (Pacific oyster).